Here is a 234-residue protein sequence, read N- to C-terminus: tRNA1(Val) (adenine(37)-N6)-methyltransferase (234 aa).

The protein belongs to the methyltransferase superfamily. tRNA (adenine-N(6)-)-methyltransferase family.

Its subcellular location is the cytoplasm. The catalysed reaction is adenosine(37) in tRNA1(Val) + S-adenosyl-L-methionine = N(6)-methyladenosine(37) in tRNA1(Val) + S-adenosyl-L-homocysteine + H(+). Functionally, specifically methylates the adenine in position 37 of tRNA(1)(Val) (anticodon cmo5UAC). This Phocaeicola vulgatus (strain ATCC 8482 / DSM 1447 / JCM 5826 / CCUG 4940 / NBRC 14291 / NCTC 11154) (Bacteroides vulgatus) protein is tRNA1(Val) (adenine(37)-N6)-methyltransferase.